The following is an 88-amino-acid chain: Beta-insect excitatory toxin BmKIT1 (88 aa).

An N-terminal signal peptide occupies residues Met-1–Gly-18. An LCN-type CS-alpha/beta domain is found at Lys-20–Asp-83. 4 cysteine pairs are disulfide-bonded: Cys-34-Cys-55, Cys-40-Cys-60, Cys-44-Cys-62, and Cys-56-Cys-82. Ile-87 is modified (isoleucine amide).

This sequence belongs to the long (4 C-C) scorpion toxin superfamily. Sodium channel inhibitor family. Beta subfamily. Expressed by the venom gland.

The protein resides in the secreted. Functionally, excitatory insect beta-toxins induce a spastic paralysis. They bind voltage-independently at site-4 of sodium channels (Nav) and shift the voltage of activation toward more negative potentials thereby affecting sodium channel activation and promoting spontaneous and repetitive firing. This toxin is active only on insects. This chain is Beta-insect excitatory toxin BmKIT1, found in Olivierus martensii (Manchurian scorpion).